The following is a 144-amino-acid chain: Protein cornichon homolog 1 (144 aa).

The Cytoplasmic segment spans residues 1–10; that stretch reads MAFTFAAFCY. A helical transmembrane segment spans residues 11–31; sequence MLALLLTAALIFFAIWHIIAF. The Lumenal portion of the chain corresponds to 32–56; sequence DELKTDYKNPIDQCNTLNPLVLPEY. The helical transmembrane segment at 57–77 threads the bilayer; sequence LIHAFFCVMFLCAAEWLTLGL. Over 78 to 122 the chain is Cytoplasmic; it reads NMPLLAYHIWRYMSRPVMSGPGLYDPTTIMNADILAYCQKEGWCK. A helical membrane pass occupies residues 123 to 143; sequence LAFYLLAFFYYLYGMIYVLVS. A topological domain (lumenal) is located at residue S144.

The protein belongs to the cornichon family. In terms of assembly, interacts with AREG immature precursor and with immature TGFA, i.e. with a prosegment and lacking full N-glycosylation, but not with the fully N-glycosylated form. In the Golgi apparatus, may form a complex with GORASP55 and transmembrane TGFA.

It is found in the endoplasmic reticulum membrane. Its subcellular location is the golgi apparatus membrane. In terms of biological role, involved in the selective transport and maturation of TGF-alpha family proteins. This chain is Protein cornichon homolog 1 (CNIH1), found in Bos taurus (Bovine).